Here is a 385-residue protein sequence, read N- to C-terminus: Flap endonuclease 1 (385 aa).

The segment at 1 to 104 (MGILGLSKLI…GELAKRAERR (104 aa)) is N-domain. A Mg(2+)-binding site is contributed by Asp34. Residues Arg47 and Arg70 each coordinate DNA. The Mg(2+) site is built by Asp86, Glu158, Glu160, Asp179, and Asp181. The I-domain stretch occupies residues 122-253 (GIEKFNRRLV…KRAIELINTY (132 aa)). Glu158 provides a ligand contact to DNA. DNA is bound by residues Gly231 and Asp233. Asp233 contributes to the Mg(2+) binding site. Residues 336-344 (TQVRLDSFF) form an interaction with PCNA region. The interval 346-385 (TLPSTPNATNAAKRKADEAKKSANNKKAKTSGGGRGRRPK) is disordered. Residues 368 to 385 (ANNKKAKTSGGGRGRRPK) are compositionally biased toward basic residues.

Belongs to the XPG/RAD2 endonuclease family. FEN1 subfamily. Interacts with PCNA. Three molecules of FEN1 bind to one PCNA trimer with each molecule binding to one PCNA monomer. PCNA stimulates the nuclease activity without altering cleavage specificity. Mg(2+) serves as cofactor. In terms of processing, phosphorylated. Phosphorylation upon DNA damage induces relocalization to the nuclear plasma.

The protein resides in the nucleus. It is found in the nucleolus. The protein localises to the nucleoplasm. It localises to the mitochondrion. Structure-specific nuclease with 5'-flap endonuclease and 5'-3' exonuclease activities involved in DNA replication and repair. During DNA replication, cleaves the 5'-overhanging flap structure that is generated by displacement synthesis when DNA polymerase encounters the 5'-end of a downstream Okazaki fragment. It enters the flap from the 5'-end and then tracks to cleave the flap base, leaving a nick for ligation. Also involved in the long patch base excision repair (LP-BER) pathway, by cleaving within the apurinic/apyrimidinic (AP) site-terminated flap. Acts as a genome stabilization factor that prevents flaps from equilibrating into structures that lead to duplications and deletions. Also possesses 5'-3' exonuclease activity on nicked or gapped double-stranded DNA, and exhibits RNase H activity. Also involved in replication and repair of rDNA and in repairing mitochondrial DNA. This chain is Flap endonuclease 1, found in Drosophila sechellia (Fruit fly).